The chain runs to 98 residues: Small ribosomal subunit protein bS18 (98 aa).

This sequence belongs to the bacterial ribosomal protein bS18 family. Part of the 30S ribosomal subunit. Forms a tight heterodimer with protein bS6.

Functionally, binds as a heterodimer with protein bS6 to the central domain of the 16S rRNA, where it helps stabilize the platform of the 30S subunit. The polypeptide is Small ribosomal subunit protein bS18 (Flavobacterium johnsoniae (strain ATCC 17061 / DSM 2064 / JCM 8514 / BCRC 14874 / CCUG 350202 / NBRC 14942 / NCIMB 11054 / UW101) (Cytophaga johnsonae)).